Reading from the N-terminus, the 432-residue chain is MAVWALGINHTTAPLDLRGRFAFAIDQIAPTLQGLRQSLGGATRHPQVETAILSTCNRTEIYCAGQQPALDHTLDWLAHSGGVSPSLLRSHSYTLEESLVARHAFRVASGLDSMVLGEAQILGQMKDAVRAAETAGALGTTLNQLFQRSFAVAKEVRTSTEIGAHSISMAAAAVRLAGQLFEDLTEIRILFVGAGEMIELAATHFAAKNPKSLAIANRTLERGEKLASRFGGEVMRLADLPDRLHEFDAVVSCTASSLPIIGLGAVERALKKRRHRPMFMVDLAVPRDIEPEVKALEDIYLYTVDDLASVVQTAQASRQAAVAQAEAIIDAGVQSFMHWMDQRSPVGGVVPLIQQIHAQADEWRALEIARAKKLIARGEDMDAVLEALSRGLTQKMLHGTLAELRAGDADTRAQTAQTVSRLFLRSQSRSGL.

Substrate contacts are provided by residues 55-58, Ser-113, 118-120, and Gln-124; these read TCNR and EAQ. Cys-56 serves as the catalytic Nucleophile. 193 to 198 is an NADP(+) binding site; the sequence is GAGEMI.

Belongs to the glutamyl-tRNA reductase family. In terms of assembly, homodimer.

The enzyme catalyses (S)-4-amino-5-oxopentanoate + tRNA(Glu) + NADP(+) = L-glutamyl-tRNA(Glu) + NADPH + H(+). The protein operates within porphyrin-containing compound metabolism; protoporphyrin-IX biosynthesis; 5-aminolevulinate from L-glutamyl-tRNA(Glu): step 1/2. In terms of biological role, catalyzes the NADPH-dependent reduction of glutamyl-tRNA(Glu) to glutamate 1-semialdehyde (GSA). In Paracidovorax citrulli (strain AAC00-1) (Acidovorax citrulli), this protein is Glutamyl-tRNA reductase.